Consider the following 255-residue polypeptide: Small ribosomal subunit protein eS1 (255 aa).

Residues 1 to 18 (MAVGKNKRLSKGKKGLKK) are compositionally biased toward basic residues. The disordered stretch occupies residues 1–28 (MAVGKNKRLSKGKKGLKKRTQDPFSRKD). N-acetylalanine; partial is present on alanine 2. The segment covering 19-28 (RTQDPFSRKD) has biased composition (basic and acidic residues).

The protein belongs to the eukaryotic ribosomal protein eS1 family. Component of the small ribosomal subunit. Mature ribosomes consist of a small (40S) and a large (60S) subunit. The 40S subunit contains about 33 different proteins and 1 molecule of RNA (18S). The 60S subunit contains about 49 different proteins and 3 molecules of RNA (25S, 5.8S and 5S).

The protein localises to the cytoplasm. The chain is Small ribosomal subunit protein eS1 from Ajellomyces dermatitidis (strain ER-3 / ATCC MYA-2586) (Blastomyces dermatitidis).